Reading from the N-terminus, the 161-residue chain is DNA-binding protein inhibitor ID-4 (161 aa).

A bHLH domain is found at 52–104; it reads AAEAAADEPALCLQCDMNDCYSRLRRLVPTIPPNKKVSKVEILQHVIDYILDL.

In terms of assembly, heterodimer with other HLH proteins.

Its subcellular location is the nucleus. Transcriptional regulator (lacking a basic DNA binding domain) which negatively regulates the basic helix-loop-helix (bHLH) transcription factors by forming heterodimers and inhibiting their DNA binding and transcriptional activity. Implicated in regulating a variety of cellular processes, including cellular growth, senescence, differentiation, apoptosis, angiogenesis, and neoplastic transformation. The polypeptide is DNA-binding protein inhibitor ID-4 (Id4) (Mus musculus (Mouse)).